Here is a 1010-residue protein sequence, read N- to C-terminus: Signal peptide, CUB and EGF-like domain-containing protein 2 (1010 aa).

The N-terminal stretch at 1–24 (MGAVWTVRLLCLFLLLLNTRQSAA) is a signal peptide. The region spanning 28–68 (NTDQCAEGSDACHIDAICQNTPTSYKCTCKTGFKGDGKHCE) is the EGF-like 1; calcium-binding domain. Cystine bridges form between Cys-32-Cys-45, Cys-39-Cys-54, Cys-56-Cys-67, Cys-73-Cys-85, Cys-81-Cys-94, Cys-96-Cys-109, Cys-115-Cys-126, and Cys-122-Cys-135. The region spanning 69-110 (DIDECDVEYNGGCVHECNNIPGNYRCTCLDGFHLAHDGHNCL) is the EGF-like 2; calcium-binding domain. Residues 111–147 (DVDECVFNNGGCQHVCVNTMGSYECRCKQGFFLSDNQ) form the EGF-like 3; calcium-binding domain. EGF-like domains are found at residues 160–196 (CMNK…QRGC) and 200–235 (CNHG…GRTC). A glycan (N-linked (GlcNAc...) asparagine) is linked at Asn-249. In terms of domain architecture, EGF-like 6 spans 269–304 (CAVNNGGCDSTCKDTSTGVRCSCPVGFTLQPDGKSC). The EGF-like 7; calcium-binding domain maps to 306 to 346 (DIDECELHNGGCDHYCRNTIGSFECSCRKGFKLLTDERSCQ). 9 disulfide bridges follow: Cys-310–Cys-321, Cys-317–Cys-330, Cys-332–Cys-345, Cys-351–Cys-361, Cys-357–Cys-370, Cys-372–Cys-384, Cys-390–Cys-401, Cys-397–Cys-410, and Cys-412–Cys-425. One can recognise an EGF-like 8; calcium-binding domain in the interval 347 to 385 (DIDECFFERTCDHTCVNSPGSFQCVCNKGYTLYGLAHCG). An EGF-like 9; calcium-binding domain is found at 386 to 426 (DINECSFNNGGCEHTCENTMGSFGCHCRAGYKLHWNKKDCI). Asn-488, Asn-703, Asn-774, and Asn-803 each carry an N-linked (GlcNAc...) asparagine glycan. The cysteines at positions 822 and 848 are disulfide-linked. The CUB domain maps to 822-934 (CGGELGEFTG…KGFQVPYVTY (113 aa)). The interval 860 to 869 (ILVVVPEIYL) is interaction with the cholesterol-anchor of SHH. An intrachain disulfide couples Cys-875 to Cys-896. The N-linked (GlcNAc...) asparagine glycan is linked to Asn-982.

As to quaternary structure, interacts with SHH via the cholesterol anchor of the dually lipid-modified SHH (ShhNp). Interacts with PTCH1. Forms homooligomers and heterooligomers with SCUBE1 and SCUBE3. Interacts with VEGFR2. In terms of processing, N-glycosylated.

Its subcellular location is the secreted. It localises to the cell surface. In terms of biological role, lipid-binding protein required for SHH long-range signaling by binding to the dually lipid-modified SHH (ShhNp) and by promoting ShhNp mobilization, solubilization and release from the cell membrane. Acts by enhancing the proteolytic processing (shedding) of the lipid-modified N- and C- terminal of ShhNp at the cell surface. Synergizes with DISP1 to cause an increase in SHH secretion. Probable cell surface coreceptor for VEGFR2 involved in VEGFR2-mediated angiogenesis. This is Signal peptide, CUB and EGF-like domain-containing protein 2 (scube2) from Danio rerio (Zebrafish).